The primary structure comprises 214 residues: Ion-translocating oxidoreductase complex subunit G (214 aa).

A helical membrane pass occupies residues 13–33 (ALLLGLFALVGVGLVALVQQF). The residue at position 180 (Thr-180) is an FMN phosphoryl threonine.

Belongs to the RnfG family. The complex is composed of six subunits: RnfA, RnfB, RnfC, RnfD, RnfE and RnfG. FMN is required as a cofactor.

The protein localises to the cell inner membrane. Its function is as follows. Part of a membrane-bound complex that couples electron transfer with translocation of ions across the membrane. The protein is Ion-translocating oxidoreductase complex subunit G of Pseudomonas aeruginosa (strain UCBPP-PA14).